Here is a 1385-residue protein sequence, read N- to C-terminus: DNA-directed RNA polymerase subunit beta'' (1385 aa).

Positions 224, 294, 301, and 304 each coordinate Zn(2+).

The protein belongs to the RNA polymerase beta' chain family. RpoC2 subfamily. As to quaternary structure, in plastids the minimal PEP RNA polymerase catalytic core is composed of four subunits: alpha, beta, beta', and beta''. When a (nuclear-encoded) sigma factor is associated with the core the holoenzyme is formed, which can initiate transcription. The cofactor is Zn(2+).

It is found in the plastid. It localises to the chloroplast. It carries out the reaction RNA(n) + a ribonucleoside 5'-triphosphate = RNA(n+1) + diphosphate. Its function is as follows. DNA-dependent RNA polymerase catalyzes the transcription of DNA into RNA using the four ribonucleoside triphosphates as substrates. This Illicium oligandrum (Star anise) protein is DNA-directed RNA polymerase subunit beta''.